Consider the following 324-residue polypeptide: Probable UDP-sugar transporter protein SLC35A4 (324 aa).

The Cytoplasmic segment spans residues Met-1–Arg-18. A helical transmembrane segment spans residues Trp-19–Leu-39. The Lumenal segment spans residues Cys-40 to Ser-52. Residues Ala-53–Trp-73 traverse the membrane as a helical segment. Topologically, residues Gln-74 to Gln-85 are cytoplasmic. The helical transmembrane segment at Ala-86–Leu-106 threads the bilayer. Residues Gln-107 to Ala-140 are Lumenal-facing. The helical transmembrane segment at Arg-141 to Leu-161 threads the bilayer. The Cytoplasmic segment spans residues Arg-162–Ser-177. A helical transmembrane segment spans residues Gly-178–Ile-198. Topologically, residues Ser-199 to Arg-214 are lumenal. Residues Leu-215–Leu-235 traverse the membrane as a helical segment. Topologically, residues His-236–Gly-248 are cytoplasmic. The chain crosses the membrane as a helical span at residues Phe-249 to Met-271. Topologically, residues Lys-272 to Arg-279 are lumenal. A helical transmembrane segment spans residues Leu-280–Leu-300. Over Gln-301 to Arg-324 the chain is Cytoplasmic.

It belongs to the nucleotide-sugar transporter family. SLC35A subfamily. In terms of assembly, found in a complex with SLC35A2 and SLC35A3.

Its subcellular location is the golgi apparatus membrane. The catalysed reaction is CDP-L-ribitol(in) + CDP(out) = CDP-L-ribitol(out) + CDP(in). Its function is as follows. Mediates the transport of CDP-ribitol. Does not exhibit CMP-sialic acid, UDP-galactose and UDP-N-acetylglucosamine transport activity. This Sus scrofa (Pig) protein is Probable UDP-sugar transporter protein SLC35A4.